A 490-amino-acid chain; its full sequence is Bifunctional pantoate ligase/cytidylate kinase (490 aa).

1-8 lines the ATP pocket; it reads MGGLHQGH. The interval 1–253 is pantoate--beta-alanine ligase; that stretch reads MGGLHQGHAR…CGETRLIDHV (253 aa). H8 functions as the Proton donor in the catalytic mechanism. Residue Q35 participates in (R)-pantoate binding. Q35 is a beta-alanine binding site. 124 to 127 is an ATP binding site; the sequence is GEKD. Position 130 (Q130) interacts with (R)-pantoate. ATP is bound by residues V153 and 161-164; that span reads ASSR. The tract at residues 254–490 is cytidylate kinase; that stretch reads FIMTRSPIVA…AKEIWPTPQG (237 aa).

This sequence in the N-terminal section; belongs to the pantothenate synthetase family. In the C-terminal section; belongs to the cytidylate kinase family. Type 1 subfamily.

The protein resides in the cytoplasm. It catalyses the reaction (R)-pantoate + beta-alanine + ATP = (R)-pantothenate + AMP + diphosphate + H(+). The catalysed reaction is CMP + ATP = CDP + ADP. It carries out the reaction dCMP + ATP = dCDP + ADP. It functions in the pathway cofactor biosynthesis; (R)-pantothenate biosynthesis; (R)-pantothenate from (R)-pantoate and beta-alanine: step 1/1. Functionally, catalyzes the condensation of pantoate with beta-alanine in an ATP-dependent reaction via a pantoyl-adenylate intermediate. Catalyzes the transfer of a phosphate group from ATP to either CMP or dCMP to form CDP or dCDP and ADP, respectively. This chain is Bifunctional pantoate ligase/cytidylate kinase, found in Synechococcus sp. (strain WH7803).